The following is a 321-amino-acid chain: Glucokinase (321 aa).

ATP is bound at residue 8–13 (GDVGGT).

It belongs to the bacterial glucokinase family.

It localises to the cytoplasm. It catalyses the reaction D-glucose + ATP = D-glucose 6-phosphate + ADP + H(+). The protein is Glucokinase of Enterobacter sp. (strain 638).